Reading from the N-terminus, the 327-residue chain is Tetraspanin-4 (327 aa).

Topologically, residues 1-6 are cytoplasmic; the sequence is MRSRSN. A helical membrane pass occupies residues 7–27; the sequence is LIGLINFFTFLLSIPILGGGI. The Extracellular segment spans residues 28–43; sequence WLSSRANSTDCLRFLQ. N-linked (GlcNAc...) asparagine glycosylation occurs at Asn34. Residues 44–64 traverse the membrane as a helical segment; that stretch reads WPLIIIGISIMVISLAGIAGA. The Cytoplasmic portion of the chain corresponds to 65 to 75; sequence CYQNKFLMWLY. The helical transmembrane segment at 76–96 threads the bilayer; it reads LFTMFFVIAALIGFTIFAYVV. Residues 97–235 lie on the Extracellular side of the membrane; the sequence is TDKGSGRFVM…LGSLKKSWRK (139 aa). Residue Asn187 is glycosylated (N-linked (GlcNAc...) asparagine). A helical transmembrane segment spans residues 236–256; that stretch reads VSVINIVVVIILVIFYVIACA. At 257-287 the chain is on the cytoplasmic side; it reads AYQNVKRMYNDEPVGEARMTNLILVIFKFKE. Residues 288–308 form a helical membrane-spanning segment; it reads ILVQFFFGIVFLLLFNGLMVC. Residues 309 to 327 lie on the Extracellular side of the membrane; the sequence is CCNDKFAFSVFFFGYVTYA.

The protein belongs to the tetraspanin (TM4SF) family.

It localises to the membrane. Its function is as follows. May be involved in the regulation of cell differentiation. The chain is Tetraspanin-4 (TET4) from Arabidopsis thaliana (Mouse-ear cress).